We begin with the raw amino-acid sequence, 392 residues long: Formate-dependent phosphoribosylglycinamide formyltransferase (392 aa).

N(1)-(5-phospho-beta-D-ribosyl)glycinamide is bound by residues 22 to 23 (EL) and Glu-82. Residues Arg-114, Lys-155, 160 to 165 (SSGKGQ), 195 to 198 (EGVV), and Glu-203 contribute to the ATP site. The ATP-grasp domain occupies 119-308 (RLAAEELGLP…EFALHVRAFL (190 aa)). Residues Glu-267 and Glu-279 each contribute to the Mg(2+) site. N(1)-(5-phospho-beta-D-ribosyl)glycinamide contacts are provided by residues Asp-286, Lys-355, and 362–363 (RR).

This sequence belongs to the PurK/PurT family. In terms of assembly, homodimer.

It catalyses the reaction N(1)-(5-phospho-beta-D-ribosyl)glycinamide + formate + ATP = N(2)-formyl-N(1)-(5-phospho-beta-D-ribosyl)glycinamide + ADP + phosphate + H(+). It participates in purine metabolism; IMP biosynthesis via de novo pathway; N(2)-formyl-N(1)-(5-phospho-D-ribosyl)glycinamide from N(1)-(5-phospho-D-ribosyl)glycinamide (formate route): step 1/1. Involved in the de novo purine biosynthesis. Catalyzes the transfer of formate to 5-phospho-ribosyl-glycinamide (GAR), producing 5-phospho-ribosyl-N-formylglycinamide (FGAR). Formate is provided by PurU via hydrolysis of 10-formyl-tetrahydrofolate. The polypeptide is Formate-dependent phosphoribosylglycinamide formyltransferase (Cronobacter sakazakii (strain ATCC BAA-894) (Enterobacter sakazakii)).